A 286-amino-acid polypeptide reads, in one-letter code: E3 ubiquitin-protein ligase SINA-like 7 (286 aa).

The segment at 51–87 (CPICYEAFTIPIFQCDNGHLACSSCCPKLNNKCPACT) adopts an RING-type zinc-finger fold. Positions 101–285 (VLESILIPCP…MRISVKKLNK (185 aa)) are SBD. Residues 104–162 (SILIPCPNAKLGCKKNVSYGKELTHEKECMFSHCACPALDCNYTSSYKDLYTHYRITHM) form an SIAH-type zinc finger. Zn(2+)-binding residues include Cys109, Cys116, His128, Cys132, Cys139, Cys144, His156, and His161.

It belongs to the SINA (Seven in absentia) family.

It carries out the reaction S-ubiquitinyl-[E2 ubiquitin-conjugating enzyme]-L-cysteine + [acceptor protein]-L-lysine = [E2 ubiquitin-conjugating enzyme]-L-cysteine + N(6)-ubiquitinyl-[acceptor protein]-L-lysine.. Its pathway is protein modification; protein ubiquitination. In terms of biological role, E3 ubiquitin-protein ligase that mediates ubiquitination and subsequent proteasomal degradation of target proteins. E3 ubiquitin ligases accept ubiquitin from an E2 ubiquitin-conjugating enzyme in the form of a thioester and then directly transfers the ubiquitin to targeted substrates. It probably triggers the ubiquitin-mediated degradation of different substrates. This Arabidopsis thaliana (Mouse-ear cress) protein is E3 ubiquitin-protein ligase SINA-like 7.